The sequence spans 241 residues: Triosephosphate isomerase (241 aa).

9-11 (NWK) is a substrate binding site. His-96 serves as the catalytic Electrophile. Glu-165 serves as the catalytic Proton acceptor. Substrate contacts are provided by residues Gly-171, Ser-204, and 225–226 (GG).

It belongs to the triosephosphate isomerase family. In terms of assembly, homodimer.

It localises to the cytoplasm. The enzyme catalyses D-glyceraldehyde 3-phosphate = dihydroxyacetone phosphate. It participates in carbohydrate biosynthesis; gluconeogenesis. Its pathway is carbohydrate degradation; glycolysis; D-glyceraldehyde 3-phosphate from glycerone phosphate: step 1/1. Its function is as follows. Involved in the gluconeogenesis. Catalyzes stereospecifically the conversion of dihydroxyacetone phosphate (DHAP) to D-glyceraldehyde-3-phosphate (G3P). This Trichodesmium erythraeum (strain IMS101) protein is Triosephosphate isomerase.